The sequence spans 278 residues: Phosphatidylglycerol--prolipoprotein diacylglyceryl transferase (278 aa).

4 helical membrane-spanning segments follow: residues 18 to 38 (IQVHWYGIIIASAVVLATILA), 55 to 75 (LILWALPVAIITARMYYVIFE), 90 to 110 (WDGGIAIYGALIGAGIVVYLF), and 115 to 135 (WIPVWLMLDIIAPVLIMAQGI). Residue arginine 137 coordinates a 1,2-diacyl-sn-glycero-3-phospho-(1'-sn-glycerol). The next 3 helical transmembrane spans lie at 177–197 (QPTFLYESLWDILGFIVLMSL), 207–227 (GEVFLSYVIWYAFGRFFVEGM), and 237–257 (IRVSQWLSVILFIGAIGILVF).

It belongs to the Lgt family.

It localises to the cell membrane. It catalyses the reaction L-cysteinyl-[prolipoprotein] + a 1,2-diacyl-sn-glycero-3-phospho-(1'-sn-glycerol) = an S-1,2-diacyl-sn-glyceryl-L-cysteinyl-[prolipoprotein] + sn-glycerol 1-phosphate + H(+). It participates in protein modification; lipoprotein biosynthesis (diacylglyceryl transfer). Catalyzes the transfer of the diacylglyceryl group from phosphatidylglycerol to the sulfhydryl group of the N-terminal cysteine of a prolipoprotein, the first step in the formation of mature lipoproteins. The protein is Phosphatidylglycerol--prolipoprotein diacylglyceryl transferase of Pediococcus pentosaceus (strain ATCC 25745 / CCUG 21536 / LMG 10740 / 183-1w).